Reading from the N-terminus, the 158-residue chain is Fucolectin (158 aa).

Positions 16–148 are F5/8 type C-like; the sequence is KATQSAQLRG…TSESLHLCEV (133 aa). Positions 35, 38, 40, and 49 each coordinate Ca(2+). Disulfide bonds link C50–C146, C82–C83, and C108–C124. Positions 52 and 79 each coordinate alpha-L-fucose. Positions 79–81 match the Cell attachment site motif; that stretch reads RGD. An alpha-L-fucose-binding site is contributed by R86. 2 residues coordinate Ca(2+): C146 and E147.

It belongs to the fucolectin family. In terms of assembly, homotrimer.

Its subcellular location is the secreted. In terms of biological role, acts as a defensive agent. Recognizes blood group fucosylated oligosaccharides including A, B, H and Lewis B-type antigens. Does not recognize Lewis A antigen and has low affinity for monovalent haptens. The protein is Fucolectin of Anguilla anguilla (European freshwater eel).